Consider the following 122-residue polypeptide: Small ribosomal subunit protein uS13 (122 aa).

The disordered stretch occupies residues 97–122; sequence PVRGQRTHTNARTRKGPARAIAGKKK.

Belongs to the universal ribosomal protein uS13 family. In terms of assembly, part of the 30S ribosomal subunit. Forms a loose heterodimer with protein S19. Forms two bridges to the 50S subunit in the 70S ribosome.

Functionally, located at the top of the head of the 30S subunit, it contacts several helices of the 16S rRNA. In the 70S ribosome it contacts the 23S rRNA (bridge B1a) and protein L5 of the 50S subunit (bridge B1b), connecting the 2 subunits; these bridges are implicated in subunit movement. Contacts the tRNAs in the A and P-sites. The sequence is that of Small ribosomal subunit protein uS13 from Bartonella bacilliformis (strain ATCC 35685 / KC583 / Herrer 020/F12,63).